A 285-amino-acid chain; its full sequence is Probable endonuclease 4 (285 aa).

Zn(2+) is bound by residues His-69, His-109, Glu-145, Asp-179, His-182, His-216, Asp-229, His-231, and Glu-261.

This sequence belongs to the AP endonuclease 2 family. The cofactor is Zn(2+).

It catalyses the reaction Endonucleolytic cleavage to 5'-phosphooligonucleotide end-products.. In terms of biological role, endonuclease IV plays a role in DNA repair. It cleaves phosphodiester bonds at apurinic or apyrimidinic (AP) sites, generating a 3'-hydroxyl group and a 5'-terminal sugar phosphate. The polypeptide is Probable endonuclease 4 (Cronobacter sakazakii (strain ATCC BAA-894) (Enterobacter sakazakii)).